The chain runs to 326 residues: Meso-diaminopimelate D-dehydrogenase (326 aa).

Residues 11 to 14, 35 to 37, 69 to 72, 92 to 94, and 121 to 125 each bind NADP(+); these read YGNL, TRR, CGGS, SFD, and VGWDP. Substrate-binding positions include Asp94, Asp124, Trp148, 154 to 155, Thr173, Arg199, His249, and Asn276; that span reads QG.

Belongs to the diaminopimelate dehydrogenase family. In terms of assembly, homodimer.

The catalysed reaction is meso-2,6-diaminopimelate + NADP(+) + H2O = (S)-2-amino-6-oxoheptanedioate + NH4(+) + NADPH + H(+). Its pathway is amino-acid biosynthesis; L-lysine biosynthesis via DAP pathway; DL-2,6-diaminopimelate from (S)-tetrahydrodipicolinate: step 1/1. With respect to regulation, the enzyme is completely inhibited by p-chloromercuribenzoate and HgCl(2) in vitro. Thioglycollate, L-cysteine and Cu(2+) also strongly inhibit the enzyme. Its function is as follows. Catalyzes the reversible NADPH-dependent reductive amination of L-2-amino-6-oxopimelate, the acyclic form of L-tetrahydrodipicolinate, to generate the meso compound, D,L-2,6-diaminopimelate. Probably plays a role in lysine biosynthesis. Is highly specific for meso-2,6-diaminopimelate as the electron donor, since the following amino acids are inert for the oxidative deamination reaction: DL-2-aminopimelate, D-glutamate, L-glutamate, D-aspartate, L-aspartate, D-alanine, L-alanine, D-valine, L-valine, D-lysine, L-lysine, D-phenylalanine, L-phenylalanine, D-leucine, L-leucine, D-threonine, L-threonine, D-serine, L-serine, D-tryptophan, L-tryptophan, D-cysteine, L-cysteine, D-histidine, L-histidine, D-methionine, D-arginine, D-proline, D-asparagine, D-glutamine, D-isoleucine and D-ornithine. Moreover, exclusively uses NADP as the electron acceptor for the oxidative deamination of meso-DAP; NAD is inert. The polypeptide is Meso-diaminopimelate D-dehydrogenase (ddh) (Ureibacillus thermosphaericus).